The following is a 154-amino-acid chain: Ribonuclease HI (154 aa).

Residues 1 to 142 (MTKHVEIFTD…CDELARTAAE (142 aa)) enclose the RNase H type-1 domain. The Mg(2+) site is built by D10, E48, D70, and D134.

This sequence belongs to the RNase H family. As to quaternary structure, monomer. Mg(2+) serves as cofactor.

It localises to the cytoplasm. It carries out the reaction Endonucleolytic cleavage to 5'-phosphomonoester.. In terms of biological role, endonuclease that specifically degrades the RNA of RNA-DNA hybrids. The sequence is that of Ribonuclease HI from Vibrio parahaemolyticus serotype O3:K6 (strain RIMD 2210633).